We begin with the raw amino-acid sequence, 356 residues long: Histidinol-phosphate aminotransferase 2 (356 aa).

Position 217 is an N6-(pyridoxal phosphate)lysine (K217).

Belongs to the class-II pyridoxal-phosphate-dependent aminotransferase family. Histidinol-phosphate aminotransferase subfamily. As to quaternary structure, homodimer. Pyridoxal 5'-phosphate is required as a cofactor.

The catalysed reaction is L-histidinol phosphate + 2-oxoglutarate = 3-(imidazol-4-yl)-2-oxopropyl phosphate + L-glutamate. Its pathway is amino-acid biosynthesis; L-histidine biosynthesis; L-histidine from 5-phospho-alpha-D-ribose 1-diphosphate: step 7/9. The sequence is that of Histidinol-phosphate aminotransferase 2 from Burkholderia pseudomallei (strain 1710b).